An 88-amino-acid polypeptide reads, in one-letter code: Phosphocarrier protein HPr (88 aa).

The HPr domain maps to 1–88 (MAEKTFKVVS…DTLAKEGLAE (88 aa)). A Phosphoserine modification is found at Ser12. The Pros-phosphohistidine intermediate role is filled by His15. The residue at position 46 (Ser46) is a Phosphoserine; by HPrK/P.

This sequence belongs to the HPr family.

The protein localises to the cytoplasm. Phosphorylation on Ser-46 inhibits the phosphoryl transfer from enzyme I to HPr. General (non sugar-specific) component of the phosphoenolpyruvate-dependent sugar phosphotransferase system (sugar PTS). This major carbohydrate active-transport system catalyzes the phosphorylation of incoming sugar substrates concomitantly with their translocation across the cell membrane. The phosphoryl group from phosphoenolpyruvate (PEP) is transferred to the phosphoryl carrier protein HPr by enzyme I. Phospho-HPr then transfers it to the PTS EIIA domain. In terms of biological role, P-Ser-HPr interacts with the catabolite control protein A (CcpA), forming a complex that binds to DNA at the catabolite response elements cre, operator sites preceding a large number of catabolite-regulated genes. Thus, P-Ser-HPr is a corepressor in carbon catabolite repression (CCR), a mechanism that allows bacteria to coordinate and optimize the utilization of available carbon sources. P-Ser-HPr also plays a role in inducer exclusion, in which it probably interacts with several non-PTS permeases and inhibits their transport activity. In Geobacillus stearothermophilus (Bacillus stearothermophilus), this protein is Phosphocarrier protein HPr (ptsH).